Reading from the N-terminus, the 688-residue chain is Translation initiation factor IF-2 (688 aa).

The span at 50–62 (LLSGKEKSEKTKE) shows a compositional bias: basic and acidic residues. The segment at 50–95 (LLSGKEKSEKTKEEDDEIETTAKNPIKESINNKKSNKRDDKKEKVN) is disordered. The segment covering 72–82 (KNPIKESINNK) has biased composition (low complexity). Residues 86-95 (KRDDKKEKVN) are compositionally biased toward basic and acidic residues. The region spanning 187-354 (KRSPIITVMG…MILLSSEILE (168 aa)) is the tr-type G domain. The tract at residues 196 to 203 (GHVDHGKT) is G1. 196-203 (GHVDHGKT) provides a ligand contact to GTP. The interval 221 to 225 (GITQH) is G2. Positions 242-245 (DTPG) are G3. GTP is bound by residues 242–246 (DTPGH) and 296–299 (NKID). The G4 stretch occupies residues 296 to 299 (NKID). The interval 332–334 (SAH) is G5.

It belongs to the TRAFAC class translation factor GTPase superfamily. Classic translation factor GTPase family. IF-2 subfamily.

The protein resides in the cytoplasm. Its function is as follows. One of the essential components for the initiation of protein synthesis. Protects formylmethionyl-tRNA from spontaneous hydrolysis and promotes its binding to the 30S ribosomal subunits. Also involved in the hydrolysis of GTP during the formation of the 70S ribosomal complex. In Clostridium botulinum (strain 657 / Type Ba4), this protein is Translation initiation factor IF-2.